The following is a 423-amino-acid chain: tRNA(Met) cytidine acetate ligase (423 aa).

ATP is bound by residues 7 to 20 (VVEY…HLYH), G102, N165, and R190.

Belongs to the TmcAL family.

The protein localises to the cytoplasm. It catalyses the reaction cytidine(34) in elongator tRNA(Met) + acetate + ATP = N(4)-acetylcytidine(34) in elongator tRNA(Met) + AMP + diphosphate. Its function is as follows. Catalyzes the formation of N(4)-acetylcytidine (ac(4)C) at the wobble position of elongator tRNA(Met), using acetate and ATP as substrates. First activates an acetate ion to form acetyladenylate (Ac-AMP) and then transfers the acetyl group to tRNA to form ac(4)C34. The protein is tRNA(Met) cytidine acetate ligase of Thermosipho africanus (strain TCF52B).